Reading from the N-terminus, the 101-residue chain is Movement protein (101 aa).

Residues 30–50 (EVAVLSFVALICIYLLYLWVL) form a helical membrane-spanning segment. The interval 78 to 101 (RSPIPNTLEPTAPVHPGPFVPGSG) is disordered. Pro residues predominate over residues 90-101 (PVHPGPFVPGSG).

Belongs to the mastrevirus movement protein family. Interacts with the capsid protein (CP). Part of a MP-CP-viral DNA complex.

It is found in the host membrane. Functionally, involved in the viral transport within, and between cells. This chain is Movement protein, found in Maize streak virus genotype E (isolate Pat) (MSV).